Here is a 257-residue protein sequence, read N- to C-terminus: Indole-3-glycerol phosphate synthase (257 aa).

Belongs to the TrpC family.

It catalyses the reaction 1-(2-carboxyphenylamino)-1-deoxy-D-ribulose 5-phosphate + H(+) = (1S,2R)-1-C-(indol-3-yl)glycerol 3-phosphate + CO2 + H2O. The protein operates within amino-acid biosynthesis; L-tryptophan biosynthesis; L-tryptophan from chorismate: step 4/5. This is Indole-3-glycerol phosphate synthase from Phenylobacterium zucineum (strain HLK1).